The following is a 420-amino-acid chain: Probable protein phosphatase 2C 73 (420 aa).

Positions 33–336 constitute a PPM-type phosphatase domain; sequence GVSMHTKQGW…DDCAVVCLFL (304 aa). Residues aspartate 69 and glycine 70 each coordinate Mn(2+). The segment covering 96–105 has biased composition (polar residues); that stretch reads LKTEQDPSSN. Residues 96-119 are disordered; the sequence is LKTEQDPSSNTDKETLEKSDCTSL. The span at 106–115 shows a compositional bias: basic and acidic residues; the sequence is TDKETLEKSD. 2 residues coordinate Mn(2+): aspartate 281 and aspartate 327.

This sequence belongs to the PP2C family. Mg(2+) serves as cofactor. Requires Mn(2+) as cofactor.

It carries out the reaction O-phospho-L-seryl-[protein] + H2O = L-seryl-[protein] + phosphate. The catalysed reaction is O-phospho-L-threonyl-[protein] + H2O = L-threonyl-[protein] + phosphate. In Oryza sativa subsp. japonica (Rice), this protein is Probable protein phosphatase 2C 73.